The following is a 123-amino-acid chain: Small ribosomal subunit protein uS13 (123 aa).

The disordered stretch occupies residues 95-123 (GLPVRGQKTKTNARTRKGPKRTVGRKKKK). Positions 101–123 (QKTKTNARTRKGPKRTVGRKKKK) are enriched in basic residues.

Belongs to the universal ribosomal protein uS13 family. In terms of assembly, part of the 30S ribosomal subunit. Forms a loose heterodimer with protein S19. Forms two bridges to the 50S subunit in the 70S ribosome.

Its function is as follows. Located at the top of the head of the 30S subunit, it contacts several helices of the 16S rRNA. In the 70S ribosome it contacts the 23S rRNA (bridge B1a) and protein L5 of the 50S subunit (bridge B1b), connecting the 2 subunits; these bridges are implicated in subunit movement. Contacts the tRNAs in the A and P-sites. The protein is Small ribosomal subunit protein uS13 of Alkaliphilus metalliredigens (strain QYMF).